The sequence spans 701 residues: Polyribonucleotide nucleotidyltransferase (701 aa).

Mg(2+)-binding residues include Asp487 and Asp493. Residues 554–613 enclose the KH domain; the sequence is PTMIAMKIDTDKIRDVIGKGGATIRAICEETKASIDIEDDGSIKIFGETKEAADAAKQRI. Residues 623–691 form the S1 motif domain; that stretch reads GKIYVGKVER…NRGRIKLSIK (69 aa).

Belongs to the polyribonucleotide nucleotidyltransferase family. As to quaternary structure, component of the RNA degradosome, which is a multiprotein complex involved in RNA processing and mRNA degradation. Mg(2+) serves as cofactor.

The protein resides in the cytoplasm. The catalysed reaction is RNA(n+1) + phosphate = RNA(n) + a ribonucleoside 5'-diphosphate. Involved in mRNA degradation. Catalyzes the phosphorolysis of single-stranded polyribonucleotides processively in the 3'- to 5'-direction. The polypeptide is Polyribonucleotide nucleotidyltransferase (Pseudomonas entomophila (strain L48)).